Here is a 299-residue protein sequence, read N- to C-terminus: MKPDAHHVKQFLLRLQDDICQTLSAVDGANFIEDSWRREAGGGGRSRVLRNGGIFEQAGVNFSHVHGDAMPASATAHRPELAGRSFEAMGVSLVVHPHNPYIPTSHANVRFFIAEKPGADPVWWFGGGFDLTPYYGFEEDAVHWHRTARDLCQPFGDDVYPRYKKWCDDYFFLKHRNEQRGIGGLFFDDLNTPDFDHCFAFMQAVGNGYTEAYLPIVERRKAMVWGERERNFQLYRRGRYVEFNLVWDRGTLFGLQTGGRTESILMSMPPLVRWEYDWQPEAGSPEAALSEFIQVRDWI.

Residue S92 coordinates substrate. The a divalent metal cation site is built by H96 and H106. The Proton donor role is filled by H106. A substrate-binding site is contributed by 108-110; that stretch reads NVR. The a divalent metal cation site is built by H145 and H175. The segment at 240 to 275 is important for dimerization; the sequence is YVEFNLVWDRGTLFGLQTGGRTESILMSMPPLVRWE. 258-260 contributes to the substrate binding site; it reads GGR.

The protein belongs to the aerobic coproporphyrinogen-III oxidase family. In terms of assembly, homodimer. A divalent metal cation is required as a cofactor.

The protein localises to the cytoplasm. The enzyme catalyses coproporphyrinogen III + O2 + 2 H(+) = protoporphyrinogen IX + 2 CO2 + 2 H2O. Its pathway is porphyrin-containing compound metabolism; protoporphyrin-IX biosynthesis; protoporphyrinogen-IX from coproporphyrinogen-III (O2 route): step 1/1. In terms of biological role, involved in the heme biosynthesis. Catalyzes the aerobic oxidative decarboxylation of propionate groups of rings A and B of coproporphyrinogen-III to yield the vinyl groups in protoporphyrinogen-IX. This Salmonella typhi protein is Oxygen-dependent coproporphyrinogen-III oxidase.